We begin with the raw amino-acid sequence, 287 residues long: tRNA selenocysteine 1-associated protein 1 (287 aa).

RRM domains follow at residues 3–86 and 96–175; these read ASLW…YVTY and YSLF…VAIP.

The protein belongs to the RRM TRSPAP family. As to quaternary structure, component of the tRNA(Sec) complex composed at least of EEFSEC, SECISBP2, SEPHS1, SEPSECS, TRNAU1AP and tRNA(Sec). Found in a complex with tRNA(Sec). Interacts with SEPSECS. Associates with mRNP and/or polysomes. Found in a complex with EEFSEC, SECISBP2, TRNAU1AP and tRNA(Sec).

The protein localises to the nucleus. Its subcellular location is the cytoplasm. Involved in the early steps of selenocysteine biosynthesis and tRNA(Sec) charging to the later steps resulting in the cotranslational incorporation of selenocysteine into selenoproteins. Stabilizes the SECISBP2, EEFSEC and tRNA(Sec) complex. May be involved in the methylation of tRNA(Sec). Enhances efficiency of selenoproteins synthesis. In Pongo abelii (Sumatran orangutan), this protein is tRNA selenocysteine 1-associated protein 1 (TRNAU1AP).